Reading from the N-terminus, the 352-residue chain is Uricase (352 aa).

Residues 1–32 are disordered; it reads MFATPLRQPAAANHQTPKNSAGMDEHGKPYQY. A compositionally biased stretch (basic and acidic residues) spans 23 to 32; sequence MDEHGKPYQY. Residues Lys-41 and Thr-86 each act as charge relay system in the active site. Positions 86, 87, 214, 231, 279, 280, and 306 each coordinate urate. His-308 functions as the Charge relay system in the catalytic mechanism. Positions 350–352 match the Microbody targeting signal motif; that stretch reads SHL.

This sequence belongs to the uricase family. In terms of tissue distribution, malpighian tubules.

Its subcellular location is the peroxisome. The catalysed reaction is urate + O2 + H2O = 5-hydroxyisourate + H2O2. It functions in the pathway purine metabolism; urate degradation; (S)-allantoin from urate: step 1/3. Its activity is regulated as follows. Repressed by 20-hydroxyecdysone. In terms of biological role, catalyzes the oxidation of uric acid to 5-hydroxyisourate, which is further processed to form (S)-allantoin. This Drosophila melanogaster (Fruit fly) protein is Uricase (Uro).